The following is a 1368-amino-acid chain: DNA-directed RNA polymerase subunit beta (1368 aa).

It belongs to the RNA polymerase beta chain family. In terms of assembly, the RNAP catalytic core consists of 2 alpha, 1 beta, 1 beta' and 1 omega subunit. When a sigma factor is associated with the core the holoenzyme is formed, which can initiate transcription.

It carries out the reaction RNA(n) + a ribonucleoside 5'-triphosphate = RNA(n+1) + diphosphate. Its function is as follows. DNA-dependent RNA polymerase catalyzes the transcription of DNA into RNA using the four ribonucleoside triphosphates as substrates. This Burkholderia multivorans (strain ATCC 17616 / 249) protein is DNA-directed RNA polymerase subunit beta.